The following is a 140-amino-acid chain: Putative esterase SSO2140 (140 aa).

This sequence belongs to the thioesterase PaaI family.

In Saccharolobus solfataricus (strain ATCC 35092 / DSM 1617 / JCM 11322 / P2) (Sulfolobus solfataricus), this protein is Putative esterase SSO2140.